Here is a 236-residue protein sequence, read N- to C-terminus: CD81 antigen (236 aa).

At 1 to 12 (MGVEGCTKCIKY) the chain is on the cytoplasmic side. Residues 13 to 33 (LLFVFNFVFWLAGGVILGVAL) form a helical membrane-spanning segment. Over 34 to 63 (WLRHDPQTTSLLYLELGNKPAPNTFYVGIY) the chain is Extracellular. A helical transmembrane segment spans residues 64–84 (ILIAVGAVMMFVGFLGCYGAI). Residues 85–89 (QESQC) are Cytoplasmic-facing. A helical transmembrane segment spans residues 90 to 112 (LLGTFFTCLVILFACEVAAGIWG). Over 113 to 201 (FVNKDQIAKD…QKIDELFSGK (89 aa)) the chain is Extracellular. Disulfide bonds link cysteine 156–cysteine 190 and cysteine 157–cysteine 175. Residues 202-224 (LYLIGIAAIVVAVIMIFEMILSM) form a helical membrane-spanning segment. Cholesterol is bound at residue glutamate 219. The Cytoplasmic portion of the chain corresponds to 225–236 (VLCCGIRNSSVY).

It belongs to the tetraspanin (TM4SF) family. Homodimer. Part of a complex composed of CD19, CR2/CD21, CD81 and IFITM1/CD225 in the membrane of mature B cells. Interacts (via the second extracellular domain) with CD19; this interaction is initiated early during biosynthesis in the ER and enables trafficking of only properly folded CD19. Part of a complex that includes MHC class II/HLA-DR molecules and IFITM1. Interacts with IFITM1. Interacts with IFITM2 and IFITM3. Part of integrin-tetraspanin complex composed of CD9, CD81, beta-1 and beta-2 integrins in the membrane of monocyte/macrophages. Interacts (via the second extracellular domain) with integrin ITGAV:ITGB3. Interacts with CD247/CD3 zeta, ICAM1 and CD9 at the immune synapse on T cell membrane. Part of a GPCR-tetraspanin complex consisting at least of ADGRG1, CD81, possibly CD9, and GNA11 in which CD81 enhances the association of ADGRG1 with GNA11. Part of a complex composed of CD9, CD81, PTGFRN and IGSF8. Interacts directly with IGSF8. Interacts with CD53 and SCIMP. Interacts with SAMHD1 (via its C-terminus). Interacts with glypican GPC3 and with the transcriptional repressor HHEX; binding to GPC3 decreases the availability of free CD81 for binding to HHEX, resulting in nuclear translocation of HHEX and transcriptional repression. Interacts with CLDN1. Interacts with CLDN6 and CLDN9. In terms of processing, not glycosylated. Likely constitutively palmitoylated at low levels. Protein palmitoylation is up-regulated upon coligation of BCR and CD9-C2R-CD81 complexes in lipid rafts. Expressed in oocytes (at protein level). Highly expressed in granulosa cells. Expressed in skeletal muscle mainly in endothelial cells of endomysial capillaries, in satellite cells and myoblasts (at protein level). Expressed in hepatocytes (at protein level).

It is found in the cell membrane. The protein localises to the basolateral cell membrane. Functionally, structural component of specialized membrane microdomains known as tetraspanin-enriched microdomains (TERMs), which act as platforms for receptor clustering and signaling. Essential for trafficking and compartmentalization of CD19 receptor on the cell surface of activated B cells. Upon initial encounter with a microbial pathogen, enables the assembly of CD19-CR2 and B cell receptor complexes at signaling TERMs, lowering the threshold dose of antigen required to trigger B cell clonal expansion and humoral immune response. In T cells, associates with CD4 or CD8 coreceptors and defines the maturation state of antigen-induced synapses with B cells. Facilitates localization of CD3 in these immune synapses, required for costimulation and sustained activation of T cells, preferentially triggering T helper type 2 immune response. Can act both as positive and negative regulator of homotypic or heterotypic cell-cell fusion processes. In myoblasts, associates with another tetraspanin CD9 in complex with PTGFRN and inhibits myotube fusion during muscle regeneration. In macrophages, associates with CD9 and beta-1 and beta-2 integrins, and prevents macrophage fusion into multinucleated giant cells specialized in ingesting complement-opsonized large particles. Also prevents the fusion between mononuclear cell progenitors into osteoclasts in charge of bone resorption. Positively regulates sperm-egg fusion and may be involved in the acrosome reaction. Regulates protein trafficking in intracellular compartments. In T cells, associates with dNTPase SAMHD1 and defines its subcellular location, enabling its degradation by the proteasome and thereby controlling intracellular dNTP levels. Also regulates integrin-dependent migration of macrophages, particularly relevant for inflammatory response in the lung. In terms of biological role, (Microbial infection) Specifically required for Plasmodium yoelii infectivity of hepatocytes, controlling sporozoite entry in hepatocytes via the parasitophorous vacuole and subsequent parasite differentiation to exoerythrocytic forms. The sequence is that of CD81 antigen from Mus musculus (Mouse).